Reading from the N-terminus, the 183-residue chain is Putative lipoprotein LpqE (183 aa).

The signal sequence occupies residues 1 to 30 (MSRFKISLPALATRVAVLGFLTLMASVLGG). C31 carries N-palmitoyl cysteine lipidation. C31 carries the S-diacylglycerol cysteine lipid modification.

It is found in the cell membrane. This Mycobacterium leprae (strain TN) protein is Putative lipoprotein LpqE (lpqE).